Here is a 231-residue protein sequence, read N- to C-terminus: Succinate dehydrogenase subunit 5, mitochondrial (231 aa).

A mitochondrion-targeting transit peptide spans 1-63 (MAAALRSSCA…AFSWNLRRLF (63 aa)).

Component of complex II composed of eight subunits in plants: four classical SDH subunits SDH1, SDH2, SDH3 and SDH4 (a flavoprotein (FP), an iron-sulfur protein (IP), and a cytochrome b composed of a large and a small subunit.), as well as four subunits unknown in mitochondria from bacteria and heterotrophic eukaryotes.

The protein localises to the mitochondrion inner membrane. The protein operates within carbohydrate metabolism; tricarboxylic acid cycle. This chain is Succinate dehydrogenase subunit 5, mitochondrial, found in Oryza sativa subsp. japonica (Rice).